The following is a 403-amino-acid chain: G-protein coupled receptor family C group 5 member B (403 aa).

The signal sequence occupies residues 1 to 28 (MFVASERKMRAHQVLTFLLLFVITSVAS). Residues 29–56 (ENASTSRGCGLDLLPQYVSLCDLDAIWG) lie on the Extracellular side of the membrane. Asn30 carries N-linked (GlcNAc...) asparagine glycosylation. A helical membrane pass occupies residues 57 to 77 (IVVEAVAGAGALITLLLMLIL). The Cytoplasmic segment spans residues 78–94 (LVRLPFIKEKEKKSPVG). A helical membrane pass occupies residues 95–115 (LHFLFLLGTLGLFGLTFAFII). The Extracellular portion of the chain corresponds to 116-126 (QEDETICSVRR). Residues 127-147 (FLWGVLFALCFSCLLSQAWRV) form a helical membrane-spanning segment. Topologically, residues 148-162 (RRLVRHGTGPAGWQL) are cytoplasmic. A helical membrane pass occupies residues 163 to 183 (VGLALCLMLVQVIIAVEWLVL). Residues 184-199 (TVLRDTRPACAYEPMD) are Extracellular-facing. Residues 200–220 (FVMALIYDMVLLVVTLGLALF) form a helical membrane-spanning segment. Residues 221-234 (TLCGKFKRWKLNGA) are Cytoplasmic-facing. A helical transmembrane segment spans residues 235–255 (FLLITAFLSVLIWVAWMTMYL). At 256 to 271 (FGNVKLQQGDAWNDPT) the chain is on the extracellular side. A helical membrane pass occupies residues 272–292 (LAITLAASGWVFVIFHAIPEI). At 293-403 (HCTLLPALQE…PPSHTGRHLW (111 aa)) the chain is on the cytoplasmic side. The disordered stretch occupies residues 349 to 371 (GFPNGSLGKRPSGSLGKRPSAPF). Ser354 carries the phosphoserine modification.

The protein belongs to the G-protein coupled receptor 3 family. In terms of tissue distribution, expression is high in kidney, pancreas, and testis, medium in brain, heart, prostate, small intestine, and spleen, low in liver, placenta, skeletal muscle, colon, ovary, and thymus, and not detectable in lung and peripheral leukocyte. According to PubMed:10945465, highly expressed in most brain areas examined, with the highest levels observed in corpus callosum, caudate nucleus, putamen, substantia nigra, thalamus, hippocampus, and spinal cord as well as in dorsal root ganglia (DRG). Expressed in glia limitans, ependymal cells, astrocyte cell bodies, the perivascular region in astrocyte endfeet, but not in neurons. In the periphery, expression levels are relatively low, compared to the CNS, with the strongest expression detected in pancreas, testis, uterus, and stomach.

The protein resides in the cell membrane. Its subcellular location is the cytoplasmic vesicle membrane. G-protein coupled receptor involved in the regulation of cell volume. The protein is G-protein coupled receptor family C group 5 member B (GPRC5B) of Homo sapiens (Human).